The following is a 337-amino-acid chain: Tert-butanol monooxygenase / tert-amyl alcohol desaturase reductase subunit (337 aa).

The 106-residue stretch at Lys9–Ile114 folds into the FAD-binding FR-type domain. In terms of domain architecture, 2Fe-2S ferredoxin-type spans Phe254 to Leu337. Residues Cys288, Cys293, Cys296, and Cys324 each coordinate [2Fe-2S] cluster.

This sequence belongs to the PDR/VanB family. As to quaternary structure, this two-component enzyme is composed of an oxygenase (MdpJ) and a reductase (MdpK). The cofactor is [2Fe-2S] cluster.

Functionally, reductase component of a two-component system involved in the degradation of tertiary alcohols such as tert-butyl alcohol (TBA) and tert-amyl alcohol (TAA). MdpK probably provides electrons via its [2Fe-2S] iron-sulfur cluster to the MdpJ oxygenase subunit. The protein is Tert-butanol monooxygenase / tert-amyl alcohol desaturase reductase subunit of Aquincola tertiaricarbonis.